A 728-amino-acid chain; its full sequence is Methylmalonyl-CoA mutase large subunit (728 aa).

Positions 75, 78, 82, 85, 87, 89, and 114 each coordinate (R)-methylmalonyl-CoA. The cob(II)alamin site is built by phenylalanine 117 and alanine 139. (R)-methylmalonyl-CoA-binding residues include threonine 195 and glutamine 197. Cob(II)alamin is bound by residues valine 206 and arginine 207. 4 residues coordinate (R)-methylmalonyl-CoA: arginine 207, histidine 244, arginine 283, and serine 285. 11 residues coordinate cob(II)alamin: glycine 333, glutamate 370, alanine 373, glycine 609, histidine 610, aspartate 611, arginine 612, serine 655, leucine 657, glycine 686, and threonine 709. The B12-binding domain occupies arginine 597 to alanine 728.

Belongs to the methylmalonyl-CoA mutase family. In terms of assembly, heterodimer of an alpha and a beta chain. Adenosylcob(III)alamin is required as a cofactor.

The catalysed reaction is (R)-methylmalonyl-CoA = succinyl-CoA. In terms of biological role, catalyzes the reversible conversion of succinyl-CoA to (R)-methylmalonyl-CoA through a radical mechanism. Is involved in the fermentation of pyruvate to propanoate that occurs in Propionibacteria. This chain is Methylmalonyl-CoA mutase large subunit (mutB), found in Propionibacterium freudenreichii subsp. shermanii.